The chain runs to 57 residues: Amyloid-beta precursor protein (57 aa).

Residues 1-33 are Extracellular-facing; that stretch reads SEVKMDAEFRHDSGYEVHHQKLVFFAEDVGSNK. Residues His-11, Tyr-15, His-18, and His-19 each contribute to the Cu(2+) site. The Zn(2+) site is built by His-11, Tyr-15, His-18, and His-19. A helical membrane pass occupies residues 34–57; sequence GAIIGLMVGGVVIATVIVITLVML.

The protein belongs to the APP family. As to quaternary structure, binds, via its C-terminus, to the PID domain of several cytoplasmic proteins, including APBB family members, the APBA family, MAPK8IP1, SHC1 and NUMB and DAB1. Binding to DAB1 inhibits its serine phosphorylation. Interacts (via NPXY motif) with DAB2 (via PID domain); the interaction is impaired by tyrosine phosphorylation of the NPXY motif. Also interacts with GPCR-like protein BPP, APPBP1, IB1, KNS2 (via its TPR domains), APPBP2 (via BaSS) and DDB1. In vitro, it binds MAPT via the MT-binding domains. Associates with microtubules in the presence of ATP and in a kinesin-dependent manner. Interacts, through a C-terminal domain, with GNAO1. Interacts with CPEB1, ANKS1B, TNFRSF21 and AGER. Interacts with ITM2B. Interacts with ITM2C. Interacts with IDE. Can form homodimers; dimerization is enhanced in the presence of Cu(2+) ions. Can form homodimers; this is promoted by heparin binding. Interacts with SORL1 (via N-terminal ectodomain); this interaction retains APP in the trans-Golgi network and reduces processing into soluble APP-alpha and amyloid-beta peptides. Interacts with PLD3. Interacts with VDAC1. Interacts with NSG1; could regulate APP processing. Amyloid-beta protein 42 interacts with FPR2. Interacts with LRRK2. Interacts (via cytoplasmic domain) with KIF5B. Interacts (via C-terminus) with APBB2/FE65L1 (via C-terminus). Interacts (via intracellular domain) with APBB3. In terms of processing, proteolytically processed under normal cellular conditions. Cleavage either by alpha-secretase, beta-secretase or theta-secretase leads to generation and extracellular release of soluble APP peptides, S-APP-alpha and S-APP-beta, and the retention of corresponding membrane-anchored C-terminal fragments, C80, C83 and C99. Subsequent processing of C80 and C83 by gamma-secretase yields P3 peptides. This is the major secretory pathway and is non-amyloidogenic. Alternatively, presenilin/nicastrin-mediated gamma-secretase processing of C99 releases the amyloid-beta proteins, amyloid-beta protein 40 and amyloid-beta protein 42, major components of amyloid plaques, and the cytotoxic C-terminal fragments, gamma-CTF(50), gamma-CTF(57) and gamma-CTF(59). PSEN1 cleavage is more efficient with C83 than with C99 as substrate (in vitro). Amyloid-beta protein 40 and Amyloid-beta protein 42 are cleaved by ACE. Many other minor amyloid-beta peptides, amyloid-beta 1-X peptides, are found in cerebral spinal fluid (CSF) including the amyloid-beta X-15 peptides, produced from the cleavage by alpha-secretase.

The protein localises to the cell membrane. It is found in the membrane. It localises to the perikaryon. The protein resides in the cell projection. Its subcellular location is the growth cone. The protein localises to the clathrin-coated pit. It is found in the early endosome. It localises to the cytoplasmic vesicle. The protein resides in the secreted. Its subcellular location is the cell surface. The protein localises to the nucleus. It is found in the cytoplasm. Its function is as follows. Functions as a cell surface receptor and performs physiological functions on the surface of neurons relevant to neurite growth, neuronal adhesion and axonogenesis. Interaction between APP molecules on neighboring cells promotes synaptogenesis. Involved in cell mobility and transcription regulation through protein-protein interactions. Can promote transcription activation through binding to APBB1-KAT5 and inhibit Notch signaling through interaction with Numb. Couples to apoptosis-inducing pathways such as those mediated by G(o) and JIP. Inhibits G(o)-alpha ATPase activity. Acts as a kinesin I membrane receptor, mediating the axonal transport of beta-secretase and presenilin 1. By acting as a kinesin I membrane receptor, plays a role in axonal anterograde transport of cargo towards synapses in axons. May be involved in copper homeostasis/oxidative stress through copper ion reduction. In vitro, copper-metallated APP induces neuronal death directly or is potentiated through Cu(2+)-mediated low-density lipoprotein oxidation. Can regulate neurite outgrowth through binding to components of the extracellular matrix such as heparin and collagen I and IV. Induces a AGER-dependent pathway that involves activation of p38 MAPK, resulting in internalization of amyloid-beta peptide and mitochondrial dysfunction in cultured cortical neurons. Provides Cu(2+) ions for GPC1 which are required for release of nitric oxide (NO) and subsequent degradation of the heparan sulfate chains on GPC1. This Ursus maritimus (Polar bear) protein is Amyloid-beta precursor protein (APP).